The primary structure comprises 196 residues: MSIEVFNESGYDGVNEEMLIDVLSFALGEMDIHPDAEASIHIVDLDTIADLHVKWLDLEGPTDVMSFPMDELTPGYSRPDGATPGPAMLGDIVLCPEFAAKQATKAGHDLAHELALLTVHGSLHLLGYDHVDPAEEREMFALQNELLADWYDNVEARGVTYQPKPSGAGAFPTAADRLELDEKMEADDSGFGGVES.

His120, His124, and His130 together coordinate Zn(2+).

The protein belongs to the endoribonuclease YbeY family. The cofactor is Zn(2+).

Its subcellular location is the cytoplasm. Its function is as follows. Single strand-specific metallo-endoribonuclease involved in late-stage 70S ribosome quality control and in maturation of the 3' terminus of the 16S rRNA. The chain is Endoribonuclease YbeY from Corynebacterium glutamicum (strain R).